A 158-amino-acid polypeptide reads, in one-letter code: Small ribosomal subunit protein uS7 (158 aa).

It belongs to the universal ribosomal protein uS7 family. Part of the 30S ribosomal subunit. Contacts proteins S9 and S11.

Functionally, one of the primary rRNA binding proteins, it binds directly to 16S rRNA where it nucleates assembly of the head domain of the 30S subunit. Is located at the subunit interface close to the decoding center, probably blocks exit of the E-site tRNA. The sequence is that of Small ribosomal subunit protein uS7 from Gluconacetobacter diazotrophicus (strain ATCC 49037 / DSM 5601 / CCUG 37298 / CIP 103539 / LMG 7603 / PAl5).